A 38-amino-acid chain; its full sequence is Photosystem II reaction center protein L (38 aa).

Residues 17–37 (SLYWGLLLIFVLAVPFSNYFF) traverse the membrane as a helical segment.

It belongs to the PsbL family. In terms of assembly, PSII is composed of 1 copy each of membrane proteins PsbA, PsbB, PsbC, PsbD, PsbE, PsbF, PsbH, PsbI, PsbJ, PsbK, PsbL, PsbM, PsbT, PsbX, PsbY, PsbZ, Psb30/Ycf12, at least 3 peripheral proteins of the oxygen-evolving complex and a large number of cofactors. It forms dimeric complexes.

The protein localises to the plastid. It localises to the chloroplast thylakoid membrane. In terms of biological role, one of the components of the core complex of photosystem II (PSII). PSII is a light-driven water:plastoquinone oxidoreductase that uses light energy to abstract electrons from H(2)O, generating O(2) and a proton gradient subsequently used for ATP formation. It consists of a core antenna complex that captures photons, and an electron transfer chain that converts photonic excitation into a charge separation. This subunit is found at the monomer-monomer interface and is required for correct PSII assembly and/or dimerization. This chain is Photosystem II reaction center protein L, found in Cedrus deodara (Deodar cedar).